The sequence spans 288 residues: Nucleotide-binding protein Tola_2941 (288 aa).

8 to 15 (GRSGSGKT) lines the ATP pocket. A GTP-binding site is contributed by 56-59 (DVRN).

This sequence belongs to the RapZ-like family.

In terms of biological role, displays ATPase and GTPase activities. This is Nucleotide-binding protein Tola_2941 from Tolumonas auensis (strain DSM 9187 / NBRC 110442 / TA 4).